Consider the following 31-residue polypeptide: Cytochrome b6-f complex subunit 8 (31 aa).

A helical membrane pass occupies residues 5-25; that stretch reads IVSMAWAALMVVFTFSLSLVI.

It belongs to the PetN family. The 4 large subunits of the cytochrome b6-f complex are cytochrome b6, subunit IV (17 kDa polypeptide, PetD), cytochrome f and the Rieske protein, while the 4 small subunits are PetG, PetL, PetM and PetN. The complex functions as a dimer.

The protein resides in the plastid membrane. Functionally, component of the cytochrome b6-f complex, which mediates electron transfer between photosystem II (PSII) and photosystem I (PSI), cyclic electron flow around PSI, and state transitions. The sequence is that of Cytochrome b6-f complex subunit 8 from Cuscuta gronovii (Common dodder).